The primary structure comprises 206 residues: uncharacterized protein (206 aa).

The first 18 residues, 1-18, serve as a signal peptide directing secretion; it reads MSSLVLIPCALLTQGIYA.

This is an uncharacterized protein from Acanthamoeba polyphaga mimivirus (APMV).